A 346-amino-acid chain; its full sequence is tRNA N6-adenosine threonylcarbamoyltransferase (346 aa).

Fe cation-binding residues include histidine 111 and histidine 115. Substrate-binding positions include 134 to 138 (LVSGG), aspartate 167, glycine 180, and asparagine 279. A Fe cation-binding site is contributed by aspartate 307.

Belongs to the KAE1 / TsaD family. The cofactor is Fe(2+).

It localises to the cytoplasm. It carries out the reaction L-threonylcarbamoyladenylate + adenosine(37) in tRNA = N(6)-L-threonylcarbamoyladenosine(37) in tRNA + AMP + H(+). In terms of biological role, required for the formation of a threonylcarbamoyl group on adenosine at position 37 (t(6)A37) in tRNAs that read codons beginning with adenine. Is involved in the transfer of the threonylcarbamoyl moiety of threonylcarbamoyl-AMP (TC-AMP) to the N6 group of A37, together with TsaE and TsaB. TsaD likely plays a direct catalytic role in this reaction. This chain is tRNA N6-adenosine threonylcarbamoyltransferase, found in Burkholderia lata (strain ATCC 17760 / DSM 23089 / LMG 22485 / NCIMB 9086 / R18194 / 383).